A 438-amino-acid chain; its full sequence is MTAAPDARTTAVMSAPLAEVDPDIAELLAKELGRQRDTLEMIASENFVPRAVLQAQGSVLTNKYAEGLPGRRYYGGCEHVDVVENLARDRAKALFGAEFANVQPHSGAQANAAVLHALMSPGERLLGLDLANGGHLTHGMRLNFSGKLYENGFYGVDPATHLIDMDAVRATALEFRPKVIIAGWSAYPRVLDFAAFRSIADEVGAKLLVDMAHFAGLVAAGLHPSPVPHADVVSTTVHKTLGGGRSGLIVGKQQYAKAINSAVFPGQQGGPLMHVIAGKAVALKIAATPEFADRQRRTLSGARIIADRLMAPDVAKAGVSVVSGGTDVHLVLVDLRDSPLDGQAAEDLLHEVGITVNRNAVPNDPRPPMVTSGLRIGTPALATRGFGDTEFTEVADIIATALATGSSVDVSALKDRATRLARAFPLYDGLEEWSLVGR.

Residues Leu-130 and 134 to 136 each bind (6S)-5,6,7,8-tetrahydrofolate; that span reads GHL. Lys-239 carries the N6-(pyridoxal phosphate)lysine modification.

This sequence belongs to the SHMT family. In terms of assembly, homodimer. It depends on pyridoxal 5'-phosphate as a cofactor.

The protein resides in the cytoplasm. It catalyses the reaction (6R)-5,10-methylene-5,6,7,8-tetrahydrofolate + glycine + H2O = (6S)-5,6,7,8-tetrahydrofolate + L-serine. Its pathway is one-carbon metabolism; tetrahydrofolate interconversion. It functions in the pathway amino-acid biosynthesis; glycine biosynthesis; glycine from L-serine: step 1/1. Catalyzes the reversible interconversion of serine and glycine with tetrahydrofolate (THF) serving as the one-carbon carrier. This reaction serves as the major source of one-carbon groups required for the biosynthesis of purines, thymidylate, methionine, and other important biomolecules. Also exhibits THF-independent aldolase activity toward beta-hydroxyamino acids, producing glycine and aldehydes, via a retro-aldol mechanism. Thus, is able to catalyze the cleavage of L-allo-threonine. The sequence is that of Serine hydroxymethyltransferase 1 from Mycobacterium tuberculosis (strain ATCC 25618 / H37Rv).